The chain runs to 667 residues: Sterile alpha motif domain-containing protein 15 (667 aa).

Over residues 1–18 (MAEVPEDYDSGPDEDGEP) the composition is skewed to acidic residues. Disordered regions lie at residues 1-108 (MAEV…KSER) and 147-424 (SAME…IKSK). 4 stretches are compositionally biased toward basic and acidic residues: residues 19-53 (ESER…HEPQ), 84-93 (IAKESKRDVP), 187-196 (ESLRVQHEET), and 228-266 (TKPD…KSSE). Residues 268-277 (AGLEPPEETQ) are compositionally biased toward acidic residues. Basic and acidic residues-rich tracts occupy residues 284 to 314 (MQRK…KSTD), 322 to 338 (EEIK…KPNE), 346 to 364 (EMMK…EEKN), and 381 to 422 (PRVE…EPIK). An SAM domain is found at 538–601 (WDPEKVAEWI…SRHTRELLEI (64 aa)).

This Macaca fascicularis (Crab-eating macaque) protein is Sterile alpha motif domain-containing protein 15 (SAMD15).